The sequence spans 227 residues: 2-C-methyl-D-erythritol 4-phosphate cytidylyltransferase (227 aa).

The protein belongs to the IspD/TarI cytidylyltransferase family. IspD subfamily.

The enzyme catalyses 2-C-methyl-D-erythritol 4-phosphate + CTP + H(+) = 4-CDP-2-C-methyl-D-erythritol + diphosphate. It participates in isoprenoid biosynthesis; isopentenyl diphosphate biosynthesis via DXP pathway; isopentenyl diphosphate from 1-deoxy-D-xylulose 5-phosphate: step 2/6. In terms of biological role, catalyzes the formation of 4-diphosphocytidyl-2-C-methyl-D-erythritol from CTP and 2-C-methyl-D-erythritol 4-phosphate (MEP). In Nostoc punctiforme (strain ATCC 29133 / PCC 73102), this protein is 2-C-methyl-D-erythritol 4-phosphate cytidylyltransferase.